We begin with the raw amino-acid sequence, 510 residues long: MKLAYWMYAGPAHIGTLRVASSFKNVHAIMHAPLGDDYFNVMRSMLERERDFTPVTASIVDRHVLARGSQNKVVENITRKDKEERPDLIVLTPTCTSSILQEDLQNFVDRASMDSESDVILADVNHYRVNELQAADRTLEQVVRFYIEKSKKQGDLNLTKTEKPSANILGIFTLGFHNQHDCRELKRLLQELGIEINEVIPEGGSVNNLKNLPRAWFNLVPYREVGLMTAIYLEKEFGMPYVSTTPMGVVDTATCIREIEKILNSFDKDVVVDFESYIDKQTRFVSQAAWFSRSIDCQNLTGKKAVVFGDATHAASMTKILAREMGINVACAGTYCKHDADWFKEQVQGYCDEVLITDDHTEVGDLIARIEPSAIFGTQMERHIGKRLNIPCGVISAPVHIQNFPLGYRPFLGYEGTNQIADLVYNSFTLGMEDHLLEIFGGHDTKEVITKSLSTEEGLTWTSDAQAELSKIPGFVRGKIKRNTEKFARENNISEINIEVMYAAKESLNA.

[4Fe-4S] cluster is bound at residue Asp36. The active-site Proton donor is the Asp296. 431-432 (GM) lines the substrate pocket.

This sequence belongs to the ChlB/BchB/BchZ family. As to quaternary structure, protochlorophyllide reductase is composed of three subunits; ChlL, ChlN and ChlB. Forms a heterotetramer of two ChlB and two ChlN subunits. [4Fe-4S] cluster is required as a cofactor.

It is found in the plastid. The protein localises to the chloroplast. The enzyme catalyses chlorophyllide a + oxidized 2[4Fe-4S]-[ferredoxin] + 2 ADP + 2 phosphate = protochlorophyllide a + reduced 2[4Fe-4S]-[ferredoxin] + 2 ATP + 2 H2O. It participates in porphyrin-containing compound metabolism; chlorophyll biosynthesis (light-independent). Functionally, component of the dark-operative protochlorophyllide reductase (DPOR) that uses Mg-ATP and reduced ferredoxin to reduce ring D of protochlorophyllide (Pchlide) to form chlorophyllide a (Chlide). This reaction is light-independent. The NB-protein (ChlN-ChlB) is the catalytic component of the complex. This Chlorokybus atmophyticus (Soil alga) protein is Light-independent protochlorophyllide reductase subunit B.